Here is a 1121-residue protein sequence, read N- to C-terminus: Phytochrome 2 (1121 aa).

The region spanning 214 to 393 is the GAF domain; sequence DIGLLCDTVV…VFGMQLNMEV (180 aa). Residue C319 participates in phytochromobilin binding. 2 consecutive PAS domains span residues 608–679 and 742–813; these read VANE…SQGE and DYKT…TKFM. The Histidine kinase domain maps to 893-1113; the sequence is YIRQEIKNPL…VVYVELPMAQ (221 aa).

The protein belongs to the phytochrome family. As to quaternary structure, homodimer. Contains one covalently linked phytochromobilin chromophore.

Functionally, regulatory photoreceptor which exists in two forms that are reversibly interconvertible by light: the Pr form that absorbs maximally in the red region of the spectrum and the Pfr form that absorbs maximally in the far-red region. Photoconversion of Pr to Pfr induces an array of morphogenic responses, whereas reconversion of Pfr to Pr cancels the induction of those responses. Pfr controls the expression of a number of nuclear genes including those encoding the small subunit of ribulose-bisphosphate carboxylase, chlorophyll A/B binding protein, protochlorophyllide reductase, rRNA, etc. It also controls the expression of its own gene(s) in a negative feedback fashion. This Ceratodon purpureus (Fire moss) protein is Phytochrome 2 (PHY2).